A 291-amino-acid polypeptide reads, in one-letter code: Small ribosomal subunit biogenesis GTPase RsgA (291 aa).

The 159-residue stretch at Lys-63 to Leu-221 folds into the CP-type G domain. Residues Thr-112–Asp-115 and Gly-164–Thr-172 each bind GTP. Zn(2+)-binding residues include Cys-245, Cys-250, His-252, and Cys-258.

The protein belongs to the TRAFAC class YlqF/YawG GTPase family. RsgA subfamily. As to quaternary structure, monomer. Associates with 30S ribosomal subunit, binds 16S rRNA. Zn(2+) serves as cofactor.

The protein localises to the cytoplasm. One of several proteins that assist in the late maturation steps of the functional core of the 30S ribosomal subunit. Helps release RbfA from mature subunits. May play a role in the assembly of ribosomal proteins into the subunit. Circularly permuted GTPase that catalyzes slow GTP hydrolysis, GTPase activity is stimulated by the 30S ribosomal subunit. This Staphylococcus saprophyticus subsp. saprophyticus (strain ATCC 15305 / DSM 20229 / NCIMB 8711 / NCTC 7292 / S-41) protein is Small ribosomal subunit biogenesis GTPase RsgA.